A 467-amino-acid polypeptide reads, in one-letter code: Asparagine--tRNA ligase (467 aa).

It belongs to the class-II aminoacyl-tRNA synthetase family. In terms of assembly, homodimer.

The protein resides in the cytoplasm. It catalyses the reaction tRNA(Asn) + L-asparagine + ATP = L-asparaginyl-tRNA(Asn) + AMP + diphosphate + H(+). This is Asparagine--tRNA ligase from Pasteurella multocida (strain Pm70).